A 447-amino-acid chain; its full sequence is 3-phosphoshikimate 1-carboxyvinyltransferase (447 aa).

Positions 36, 37, and 41 each coordinate 3-phosphoshikimate. Lysine 36 is a binding site for phosphoenolpyruvate. Phosphoenolpyruvate is bound by residues glycine 109 and arginine 138. 4 residues coordinate 3-phosphoshikimate: serine 183, glutamine 185, aspartate 333, and lysine 360. Residue glutamine 185 coordinates phosphoenolpyruvate. Aspartate 333 functions as the Proton acceptor in the catalytic mechanism. Residues arginine 364 and arginine 406 each contribute to the phosphoenolpyruvate site.

This sequence belongs to the EPSP synthase family. Monomer.

The protein resides in the cytoplasm. It catalyses the reaction 3-phosphoshikimate + phosphoenolpyruvate = 5-O-(1-carboxyvinyl)-3-phosphoshikimate + phosphate. Its pathway is metabolic intermediate biosynthesis; chorismate biosynthesis; chorismate from D-erythrose 4-phosphate and phosphoenolpyruvate: step 6/7. In terms of biological role, catalyzes the transfer of the enolpyruvyl moiety of phosphoenolpyruvate (PEP) to the 5-hydroxyl of shikimate-3-phosphate (S3P) to produce enolpyruvyl shikimate-3-phosphate and inorganic phosphate. The polypeptide is 3-phosphoshikimate 1-carboxyvinyltransferase (Synechocystis sp. (strain ATCC 27184 / PCC 6803 / Kazusa)).